The sequence spans 287 residues: Bifunctional protein FolD (287 aa).

Residues 160–162, serine 189, and threonine 230 contribute to the NADP(+) site; that span reads GRS.

The protein belongs to the tetrahydrofolate dehydrogenase/cyclohydrolase family. As to quaternary structure, homodimer.

The catalysed reaction is (6R)-5,10-methylene-5,6,7,8-tetrahydrofolate + NADP(+) = (6R)-5,10-methenyltetrahydrofolate + NADPH. It carries out the reaction (6R)-5,10-methenyltetrahydrofolate + H2O = (6R)-10-formyltetrahydrofolate + H(+). The protein operates within one-carbon metabolism; tetrahydrofolate interconversion. Functionally, catalyzes the oxidation of 5,10-methylenetetrahydrofolate to 5,10-methenyltetrahydrofolate and then the hydrolysis of 5,10-methenyltetrahydrofolate to 10-formyltetrahydrofolate. The sequence is that of Bifunctional protein FolD from Chlamydia trachomatis serovar D (strain ATCC VR-885 / DSM 19411 / UW-3/Cx).